The sequence spans 356 residues: D-xylulose reductase (356 aa).

Residues Cys44, His69, and Glu155 each contribute to the Zn(2+) site. 179–184 (GAGPIG) serves as a coordination point for NAD(+).

This sequence belongs to the zinc-containing alcohol dehydrogenase family. It depends on Zn(2+) as a cofactor.

It carries out the reaction xylitol + NAD(+) = D-xylulose + NADH + H(+). It participates in carbohydrate degradation; L-arabinose degradation via L-arabinitol; D-xylulose 5-phosphate from L-arabinose (fungal route): step 4/5. The chain is D-xylulose reductase (XYL2) from Saccharomyces cerevisiae (strain ATCC 204508 / S288c) (Baker's yeast).